The primary structure comprises 552 residues: Glutathione reductase, chloroplastic/mitochondrial (552 aa).

Residues 1–60 (MNQAMATPLSLSCCSPTLTRSTLFFTKTFPFSRSFSTPLPLSTKTLISLSPPHRTFAVRA) constitute a chloroplast and mitochondrion transit peptide. FAD is bound by residues Ser83, Gly84, Glu103, Thr120, Cys121, and Lys129. Ser83 lines the glutathione pocket. Cys121 and Cys126 are oxidised to a cystine. Tyr178 lines the glutathione pocket. An FAD-binding site is contributed by Gly194. Residues Gly254, Ile257, Glu260, Arg277, Arg283, and Gly341 each contribute to the NADP(+) site. FAD-binding residues include Asp382 and Thr390. NADP(+) is bound at residue Ala420. His515 provides a ligand contact to FAD. His515 acts as the Proton acceptor in catalysis. The segment at 527-552 (TPTRKVRKNQASQGKSDSKAKAVAGS) is disordered.

The protein belongs to the class-I pyridine nucleotide-disulfide oxidoreductase family. As to quaternary structure, homodimer. FAD serves as cofactor.

It localises to the plastid. The protein resides in the chloroplast. It is found in the mitochondrion. The catalysed reaction is 2 glutathione + NADP(+) = glutathione disulfide + NADPH + H(+). In terms of biological role, catalyzes the reduction of glutathione disulfide (GSSG) to reduced glutathione (GSH). Maintains high levels of GSH in the chloroplast. The polypeptide is Glutathione reductase, chloroplastic/mitochondrial (GR) (Pisum sativum (Garden pea)).